The primary structure comprises 488 residues: SAGA complex subunit HFI1 (488 aa).

Disordered stretches follow at residues 1 to 58 (MSAI…QGPN) and 352 to 383 (QLDD…IGDI). The segment covering 37-58 (AVSNHTEPNNGNNETAEPQGPN) has biased composition (polar residues).

As to quaternary structure, component of the 1.8 MDa SAGA (Spt-Ada-Gcn5 acetyltransferase) complex, which is composed of 19 subunits TRA1, SPT7, TAF5, NGG1/ADA3, SGF73, SPT20/ADA5, SPT8, TAF12, TAF6, HFI1/ADA1, UBP8, GCN5, ADA2, SPT3, SGF29, TAF10, TAF9, SGF11 and SUS1. The SAGA complex is composed of 4 modules, namely the HAT (histone acetyltransferase) module (GCN5, ADA2, NGG1/ADA3 and SGF29), the DUB (deubiquitinating) module (UBP8, SGF11, SGF73 and SUS1), the core or TAF (TBP-associated factor) module (TAF5, TAF6, TAF9, TAF10 and TAF12), and the Tra1 or SPT (Suppressor of Ty) module (TRA1, HFI1/ADA1, SPT3, SPT7, SPT8 and SPT20/ADA5). The Tra1/SPT module binds activators, the core module recruits TBP (TATA-binding protein), the HAT module contains the histone H3 acetyltransferase GCN5, and the DUB module comprises the histone H2B deubiquitinase UBP8. Also identified in an altered form of SAGA, named SALSA (SAGA altered, Spt8 absent) or SLIK (SAGA-like) complex, which contains a C-terminal truncated form of SPT7 and is missing SPT8. However, it has been shown that the SAGA and SAGA-like SALSA/SLIK transcriptional coactivators are structurally and biochemically equivalent. Component of an ADA/GCN5 complex that consists of HFI1/ADA1, ADA2, NGG1/ADA3, SPT20/ADA5 and GCN5 and probably is a subcomplex of SAGA.

It is found in the nucleus. Functionally, component of the transcription coactivator SAGA complex. SAGA acts as a general cofactor required for essentially all RNA polymerase II transcription. At the promoters, SAGA is required for transcription pre-initiation complex (PIC) recruitment. It influences RNA polymerase II transcriptional activity through different activities such as TBP interaction (via core/TAF module) and promoter selectivity, interaction with transcription activators (via Tra1/SPT module), and chromatin modification through histone acetylation (via HAT module) and deubiquitination (via DUB module). SAGA preferentially acetylates histones H3 (to form H3K9ac, H3K14ac, H3K18ac and H3K23ac) and H2B and deubiquitinates histone H2B. SAGA interacts with DNA via upstream activating sequences (UASs). Also identified in a modified version of SAGA named SALSA or SLIK. The cleavage of SPT7 and the absence of the SPT8 subunit in SLIK neither drive any major conformational differences in its structure compared with SAGA, nor significantly affect HAT, DUB, or DNA-binding activities. The protein is SAGA complex subunit HFI1 (HFI1) of Saccharomyces cerevisiae (strain ATCC 204508 / S288c) (Baker's yeast).